A 93-amino-acid polypeptide reads, in one-letter code: Large ribosomal subunit protein uL23cz/uL23cy (93 aa).

This sequence belongs to the universal ribosomal protein uL23 family. As to quaternary structure, part of the 50S ribosomal subunit.

It is found in the plastid. Its subcellular location is the chloroplast. Binds to 23S rRNA. The chain is Large ribosomal subunit protein uL23cz/uL23cy (rpl23-A) from Oryza nivara (Indian wild rice).